The following is a 240-amino-acid chain: Vesicle-associated membrane protein 727 (240 aa).

The Cytoplasmic segment spans residues 1–215 (MSQKGLIYSF…MWLQSLQMKL (215 aa)). The Longin domain maps to 6 to 133 (LIYSFVAKGT…NLDREFGPIL (128 aa)). The v-SNARE coiled-coil homology domain occupies 149–209 (KLSKLKAQIT…RQLRRKMWLQ (61 aa)). A helical; Anchor for type IV membrane protein membrane pass occupies residues 216-236 (MVAGAVFSFILIVWVVACGGF). Over 237-240 (KCSS) the chain is Vesicular.

The protein belongs to the synaptobrevin family. As to quaternary structure, interacts with subunits of the class C core vacuole/endosome tethering (CORVET) complex including VPS11, VCL1, VPS18, VPS33, VPS3 and VPS8. As to expression, highly expressed in flowers. Detected in leaves, stems and roots.

The protein localises to the early endosome membrane. The protein resides in the endosome membrane. Functionally, involved in the targeting and/or fusion of transport vesicles to their target membrane. This is Vesicle-associated membrane protein 727 (VAMP727) from Arabidopsis thaliana (Mouse-ear cress).